Consider the following 146-residue polypeptide: Pseudoazurin (146 aa).

The signal sequence occupies residues 1–23; sequence MRNIAIKFAAAGILAMLAAPALA. The Plastocyanin-like domain maps to 28–116; that stretch reads VHMLNKGAEG…MGMIALIAVG (89 aa). Residues His63, Cys101, His104, and Met109 each contribute to the Cu cation site.

It depends on Cu cation as a cofactor.

Its subcellular location is the periplasm. In terms of biological role, this soluble electron transfer copper protein is required for the inactivation of copper-containing nitrite reductase in the presence of oxygen. Serves as a direct electron donor to the nitrite reductase. This chain is Pseudoazurin, found in Alcaligenes faecalis.